The following is a 322-amino-acid chain: Biotin synthase (322 aa).

Positions 39-266 constitute a Radical SAM core domain; the sequence is NQIQVSSLLN…KSVVRLSAGR (228 aa). Positions 54, 58, and 61 each coordinate [4Fe-4S] cluster. [2Fe-2S] cluster contacts are provided by Cys-98, Cys-129, Cys-189, and Arg-261.

The protein belongs to the radical SAM superfamily. Biotin synthase family. Homodimer. [4Fe-4S] cluster serves as cofactor. The cofactor is [2Fe-2S] cluster.

It catalyses the reaction (4R,5S)-dethiobiotin + (sulfur carrier)-SH + 2 reduced [2Fe-2S]-[ferredoxin] + 2 S-adenosyl-L-methionine = (sulfur carrier)-H + biotin + 2 5'-deoxyadenosine + 2 L-methionine + 2 oxidized [2Fe-2S]-[ferredoxin]. The protein operates within cofactor biosynthesis; biotin biosynthesis; biotin from 7,8-diaminononanoate: step 2/2. Its function is as follows. Catalyzes the conversion of dethiobiotin (DTB) to biotin by the insertion of a sulfur atom into dethiobiotin via a radical-based mechanism. This Ruthia magnifica subsp. Calyptogena magnifica protein is Biotin synthase.